The chain runs to 886 residues: MEPPTVPSERSLSLSLPGPREGQATLKPPPQHLWRQPRTPIRIQQRGYSDSAERAERERQPHRPIERADAMDTSDRPGLRTTRMSWPSSFHGTGTGSGGAGGGSSRRFEAENGPTPSPGRSPLDSQASPGLVLHAGAATSQRRESFLYRSDSDYDMSPKTMSRNSSVTSEAHAEDLIVTPFAQVLASLRSVRSNFSLLTNVPVPSNKRSPLGGPTPVCKATLSEETCQQLARETLEELDWCLEQLETMQTYRSVSEMASHKFKRMLNRELTHLSEMSRSGNQVSEYISTTFLDKQNEVEIPSPTMKEREKQQAPRPRPSQPPPPPVPHLQPMSQITGLKKLMHSNSLNNSNIPRFGVKTDQEELLAQELENLNKWGLNIFCVSDYAGGRSLTCIMYMIFQERDLLKKFRIPVDTMVTYMLTLEDHYHADVAYHNSLHAADVLQSTHVLLATPALDAVFTDLEILAALFAAAIHDVDHPGVSNQFLINTNSELALMYNDESVLENHHLAVGFKLLQEDNCDIFQNLSKRQRQSLRKMVIDMVLATDMSKHMTLLADLKTMVETKKVTSSGVLLLDNYSDRIQVLRNMVHCADLSNPTKPLELYRQWTDRIMAEFFQQGDRERERGMEISPMCDKHTASVEKSQVGFIDYIVHPLWETWADLVHPDAQEILDTLEDNRDWYYSAIRQSPSPPPEEESRGPGHPPLPDKFQFELTLEEEEEEEISMAQIPCTAQEALTAQGLSGVEEALDATIAWEASPAQESLEVMAQEASLEAELEAVYLTQQAQSTGSAPVAPDEFSSREEFVVAVSHSSPSALALQSPLLPAWRTLSVSEHAPGLPGLPSTAAEVEAQREHQAAKRACSACAGTFGEDTSALPAPGGGGSGGDPT.

Residues 1–128 are disordered; it reads MEPPTVPSER…GRSPLDSQAS (128 aa). Serine 13 carries the post-translational modification Phosphoserine. A compositionally biased stretch (low complexity) spans 36 to 46; sequence QPRTPIRIQQR. Over residues 51-78 the composition is skewed to basic and acidic residues; it reads SAERAERERQPHRPIERADAMDTSDRPG. Over residues 93–104 the composition is skewed to gly residues; it reads TGTGSGGAGGGS. Phosphoserine occurs at positions 119 and 123. Position 152 is a phosphoserine; by MAPKAPK2 (serine 152). A phosphoserine mark is found at serine 157, serine 165, and serine 209. Residues 294 to 331 form a disordered region; the sequence is KQNEVEIPSPTMKEREKQQAPRPRPSQPPPPPVPHLQP. The segment covering 315-328 has biased composition (pro residues); sequence RPRPSQPPPPPVPH. At serine 346 the chain carries Phosphoserine. Residues 357–686 form the PDEase domain; it reads VKTDQEELLA…DWYYSAIRQS (330 aa). A Glycyl lysine isopeptide (Lys-Gly) (interchain with G-Cter in SUMO) cross-link involves residue lysine 358. The active-site Proton donor is the histidine 433. Histidine 433 contributes to the 3',5'-cyclic AMP binding site. Positions 433 and 437 each coordinate AMP. Residues histidine 437, histidine 473, aspartate 474, and aspartate 591 each contribute to the Zn(2+) site. Aspartate 474, aspartate 591, glutamine 642, and phenylalanine 645 together coordinate AMP. Mg(2+) is bound at residue aspartate 474. Aspartate 474 provides a ligand contact to Mn(2+). The 3',5'-cyclic AMP site is built by glutamine 642 and phenylalanine 645. 2 disordered regions span residues 682–705 and 866–886; these read AIRQSPSPPPEEESRGPGHPPLPD and FGEDTSALPAPGGGGSGGDPT. Phosphoserine is present on residues serine 686 and serine 688. Gly residues predominate over residues 876-886; sequence PGGGGSGGDPT.

Belongs to the cyclic nucleotide phosphodiesterase family. PDE4 subfamily. In terms of assembly, interacts with LYN (via SH3 domain). Interacts with ARRB2. It depends on Zn(2+) as a cofactor. Mg(2+) is required as a cofactor. Requires Mn(2+) as cofactor. Post-translationally, proteolytically cleaved by CASP3. Phosphorylated at Ser-119 by PKA. In terms of tissue distribution, expressed in lymphoid cell subsets including CD8-positive T cells and T-helper 2 cells. Expressed in dendritic cells. As to expression, highly expressed in liver, stomach, testis, thyroid and adrenal glands and at a lower extent in placenta, kidney, pancreas, ovary, uterus and skin. Expressed in myeloid cell subsets including dendritic cells, monocytes, macrophages, eosinophils and mast cells. Expressed in natural killer cells. Expressed in bronchial smooth muscle. Expressed at high levels in the heart and small intestine. It is also found in the brain, kidney, spleen, colon, salivary gland, ovary and peripheral blood lymphocytes. In terms of tissue distribution, expressed predominantly in skeletal muscle and brain and at lower levels in the testis. Found in specific neuronal subpopulations including cortical pyramidal neurons, horn neurons in the spinal cord and Purkinje cells in cerebellum (at protein level).

It is found in the cytoplasm. Its subcellular location is the perinuclear region. The protein localises to the cell projection. It localises to the ruffle membrane. The protein resides in the cytosol. It is found in the membrane. The catalysed reaction is 3',5'-cyclic AMP + H2O = AMP + H(+). It participates in purine metabolism; 3',5'-cyclic AMP degradation; AMP from 3',5'-cyclic AMP: step 1/1. With respect to regulation, inhibited by rolipram, cilomilast, Ro 20-1724, roflumilast and denbufylline. Its activity is regulated as follows. Inhibited by rolipram. Inhibited by rolipram and cilomilast. Its function is as follows. Hydrolyzes the second messenger 3',5'-cyclic AMP (cAMP), which is a key regulator of many important physiological processes. In terms of biological role, efficiently hydrolyzes cAMP. Functionally, efficiently hydrolyzes cAMP. The phosphodiesterase activity is not affected by calcium, calmodulin or cyclic GMP (cGMP) levels. Does not hydrolyze cGMP. This chain is 3',5'-cyclic-AMP phosphodiesterase 4A (PDE4A), found in Homo sapiens (Human).